Reading from the N-terminus, the 569-residue chain is Serine/threonine-protein kinase gad8 (569 aa).

Residues 19–63 (GLNSGGSSFTRGLKNSTLSSTSSRKSSDEKSRKSSEDKRSPQSTV) form a disordered region. The span at 31-42 (LKNSTLSSTSSR) shows a compositional bias: low complexity. The segment covering 43–58 (KSSDEKSRKSSEDKRS) has biased composition (basic and acidic residues). A C2 domain is found at 45–202 (SDEKSRKSSE…IVNKLTDEWV (158 aa)). The Protein kinase domain occupies 230-485 (FELLKVVGKG…AQEIKNHPFF (256 aa)). ATP is bound by residues 236–244 (VGKGSFGKV) and K259. D353 functions as the Proton acceptor in the catalytic mechanism. Residue T387 is modified to Phosphothreonine; by ksg1. An AGC-kinase C-terminal domain is found at 486 to 557 (DDIDWKKLCA…QRPTTIDTSD (72 aa)). Phosphoserine; by TORC2 occurs at positions 527 and 546.

Belongs to the protein kinase superfamily. AGC Ser/Thr protein kinase family. In terms of processing, phosphorylated by ksg1 and target of rapamycin complex 2 (TORC2), affecting the kinase activity of gad8 in a nutrient-dependent manner.

It catalyses the reaction L-seryl-[protein] + ATP = O-phospho-L-seryl-[protein] + ADP + H(+). It carries out the reaction L-threonyl-[protein] + ATP = O-phospho-L-threonyl-[protein] + ADP + H(+). Functionally, involved in a signaling module for sexual development and cell growth under stressed conditions. Required for G1 arrest under nitrogen starvation and for growth at high temperature and osmolarity. The sequence is that of Serine/threonine-protein kinase gad8 from Schizosaccharomyces pombe (strain 972 / ATCC 24843) (Fission yeast).